The sequence spans 367 residues: Pantothenate kinase CAB1 (367 aa).

Belongs to the type II pantothenate kinase family.

The protein localises to the cytoplasm. Its subcellular location is the nucleus. The catalysed reaction is (R)-pantothenate + ATP = (R)-4'-phosphopantothenate + ADP + H(+). It functions in the pathway cofactor biosynthesis; coenzyme A biosynthesis; CoA from (R)-pantothenate: step 1/5. Its activity is regulated as follows. Regulated by feedback inhibition by malonyl-CoA. Plays a role in the physiological regulation of the intracellular CoA concentration. The protein is Pantothenate kinase CAB1 (CAB1) of Saccharomyces cerevisiae (strain ATCC 204508 / S288c) (Baker's yeast).